We begin with the raw amino-acid sequence, 233 residues long: Phosphoenolpyruvate guanylyltransferase 1 (233 aa).

The phosphoenolpyruvate site is built by threonine 154, glycine 171, and serine 174.

This sequence belongs to the CofC family.

The enzyme catalyses phosphoenolpyruvate + GTP + H(+) = enolpyruvoyl-2-diphospho-5'-guanosine + diphosphate. Its pathway is cofactor biosynthesis; coenzyme F420 biosynthesis. Functionally, guanylyltransferase that catalyzes the activation of phosphoenolpyruvate (PEP) as enolpyruvoyl-2-diphospho-5'-guanosine, via the condensation of PEP with GTP. It is involved in the biosynthesis of coenzyme F420, a hydride carrier cofactor. In Rhodococcus jostii (strain RHA1), this protein is Phosphoenolpyruvate guanylyltransferase 1.